A 561-amino-acid chain; its full sequence is Malto-oligosyltrehalose trehalohydrolase (561 aa).

Residue 253–258 (RLDAVH) participates in substrate binding. Asp255 serves as the catalytic Nucleophile. Glu286 (proton donor) is an active-site residue. Substrate is bound by residues 311–315 (DDFHH) and 379–384 (HDQVGN).

Belongs to the glycosyl hydrolase 13 family. In terms of assembly, homodimer.

Its subcellular location is the cytoplasm. It catalyses the reaction hydrolysis of (1-&gt;4)-alpha-D-glucosidic linkage in 4-alpha-D-[(1-&gt;4)-alpha-D-glucanosyl]n trehalose to yield trehalose and (1-&gt;4)-alpha-D-glucan.. The protein operates within glycan biosynthesis; trehalose biosynthesis. This Saccharolobus solfataricus (strain ATCC 35092 / DSM 1617 / JCM 11322 / P2) (Sulfolobus solfataricus) protein is Malto-oligosyltrehalose trehalohydrolase (treZ).